A 256-amino-acid chain; its full sequence is DNA repair protein RecO (256 aa).

The protein belongs to the RecO family.

Involved in DNA repair and RecF pathway recombination. The polypeptide is DNA repair protein RecO (Rhizobium leguminosarum bv. trifolii (strain WSM2304)).